Here is a 986-residue protein sequence, read N- to C-terminus: Regulator of telomere elongation helicase 1 homolog (986 aa).

Residues alanine 7–alanine 326 enclose the Helicase ATP-binding domain. Position 42–49 (serine 42–threonine 49) interacts with ATP. Residues cysteine 148, cysteine 166, cysteine 175, and cysteine 211 each coordinate [4Fe-4S] cluster. The DEAH box motif lies at aspartate 254 to histidine 257. Threonine 875 bears the Phosphothreonine mark.

The protein belongs to the helicase family. RAD3/XPD subfamily.

It is found in the nucleus. It carries out the reaction ATP + H2O = ADP + phosphate + H(+). Its function is as follows. A probable ATP-dependent DNA helicase implicated in DNA repair and the maintenance of genomic stability. Acts as an anti-recombinase to counteract toxic recombination and limit crossover during meiosis. Regulates meiotic recombination and crossover homeostasis by physically dissociating strand invasion events and thereby promotes noncrossover repair by meiotic synthesis dependent strand annealing (SDSA) as well as disassembly of D loop recombination intermediates. This is Regulator of telomere elongation helicase 1 homolog from Drosophila grimshawi (Hawaiian fruit fly).